The following is a 215-amino-acid chain: Chaperone protein TorD (215 aa).

Belongs to the TorD/DmsD family. TorD subfamily.

It localises to the cytoplasm. Involved in the biogenesis of TorA. Acts on TorA before the insertion of the molybdenum cofactor and, as a result, probably favors a conformation of the apoenzyme that is competent for acquiring the cofactor. This chain is Chaperone protein TorD, found in Aliivibrio salmonicida (strain LFI1238) (Vibrio salmonicida (strain LFI1238)).